A 258-amino-acid chain; its full sequence is Imidazole glycerol phosphate synthase subunit HisF (258 aa).

Active-site residues include Asp11 and Asp130.

Belongs to the HisA/HisF family. In terms of assembly, heterodimer of HisH and HisF.

The protein resides in the cytoplasm. The enzyme catalyses 5-[(5-phospho-1-deoxy-D-ribulos-1-ylimino)methylamino]-1-(5-phospho-beta-D-ribosyl)imidazole-4-carboxamide + L-glutamine = D-erythro-1-(imidazol-4-yl)glycerol 3-phosphate + 5-amino-1-(5-phospho-beta-D-ribosyl)imidazole-4-carboxamide + L-glutamate + H(+). It participates in amino-acid biosynthesis; L-histidine biosynthesis; L-histidine from 5-phospho-alpha-D-ribose 1-diphosphate: step 5/9. IGPS catalyzes the conversion of PRFAR and glutamine to IGP, AICAR and glutamate. The HisF subunit catalyzes the cyclization activity that produces IGP and AICAR from PRFAR using the ammonia provided by the HisH subunit. The sequence is that of Imidazole glycerol phosphate synthase subunit HisF from Methylorubrum populi (strain ATCC BAA-705 / NCIMB 13946 / BJ001) (Methylobacterium populi).